The following is a 411-amino-acid chain: Argininosuccinate synthase (411 aa).

ATP is bound by residues 11–19 (AYSGGLDTS) and Ala37. L-citrulline-binding residues include Tyr88 and Ser93. ATP is bound at residue 116–124 (SHGATGKGN). L-aspartate is bound by residues Thr120, Asn124, and Asp125. Position 124 (Asn124) interacts with L-citrulline. Residues Arg128, Ser181, Ser190, Glu271, and Tyr283 each coordinate L-citrulline.

The protein belongs to the argininosuccinate synthase family. As to quaternary structure, homotetramer.

The protein resides in the cytoplasm. It localises to the cytosol. The enzyme catalyses L-citrulline + L-aspartate + ATP = 2-(N(omega)-L-arginino)succinate + AMP + diphosphate + H(+). It participates in amino-acid biosynthesis; L-arginine biosynthesis; L-arginine from L-ornithine and carbamoyl phosphate: step 2/3. Its pathway is nitrogen metabolism; urea cycle; (N(omega)-L-arginino)succinate from L-aspartate and L-citrulline: step 1/1. One of the enzymes of the urea cycle, the metabolic pathway transforming neurotoxic amonia produced by protein catabolism into inocuous urea in the liver of ureotelic animals. Catalyzes the formation of arginosuccinate from aspartate, citrulline and ATP and together with ASL it is responsible for the biosynthesis of arginine in most body tissues. The chain is Argininosuccinate synthase from Xenopus laevis (African clawed frog).